A 116-amino-acid chain; its full sequence is Ribonuclease P protein component (116 aa).

This sequence belongs to the RnpA family. In terms of assembly, consists of a catalytic RNA component (M1 or rnpB) and a protein subunit.

The enzyme catalyses Endonucleolytic cleavage of RNA, removing 5'-extranucleotides from tRNA precursor.. RNaseP catalyzes the removal of the 5'-leader sequence from pre-tRNA to produce the mature 5'-terminus. It can also cleave other RNA substrates such as 4.5S RNA. The protein component plays an auxiliary but essential role in vivo by binding to the 5'-leader sequence and broadening the substrate specificity of the ribozyme. In Picosynechococcus sp. (strain ATCC 27264 / PCC 7002 / PR-6) (Agmenellum quadruplicatum), this protein is Ribonuclease P protein component.